A 972-amino-acid polypeptide reads, in one-letter code: MRGARGAWDFLCVLLLLLRVQTGSSQPSVSPEEASPPFIDPAKSELIVSVGDEIRLFCNDPGFVKWTFEVLDQMNENKQKEWIMQKAEATNTGKYTCTNKHGLSSSIYVFVRDPDKLFLVDRSLYGKEDNDTLVRCPLTDPEVTNYSLKGCQGKPIPKDLRFVPDPKAGITIKNVKRAYHRLCLHCSADRKGQSKLSEKFILKVRPAFKAVPVVSVSKASYLLREGEEFTVTCTIKDVSSSVYSSWKKENSPTKLQEKYNSWHQGDFNYERQATLTISSVRVNDSGVFMCYASNTFGSANVTTTLEVVDKGFINIFPMINTTVFVNDGENVDLIVEYEAFPRPEHQQWIYMNRTFTDKWEDYPKSENESNIRYVSELHLTRLKDTEGGTYTFLVSNSDVSSSIAFTVYVNTKPEILTYDRLMNGMLQCVAAGFPEPTIDWYFCPGTEQRCSAPVLPVDVQIQNTSGPPFGKLVVQSSIDSSAFKHNGTVECKAYNDVGKTSAYFNFAFKEQIQPHTLFTPLLIGFVVVAGMMCIIVMILTYKYLQKPMYEVQWKVVEEINGNNYVYIDPTQLPYDHKWEFPRNRLSFGKTLGAGAFGKVVEATAYGLIKSDTAMTVAVKMLKPSAHLTEREALMSELKVLSYLGNHMNIVNLLGACTIGGPTLVITEYCCYGDLLNFLRRKRDSFICSKQEDHAEAALYKNLLHSKESSCSDSTNEYMDMKPGVSYVVPTKAEKRRSARVGSYIERDVTPAIMEDDELALDLEDLLSFSYQVAKGMAFLASKNCIHRDLAARNILLTHGRITKICDFGLARDIKNDSNYVVKGNARLPVKWMAPESIFNCVYTFESDVWSYGIFLWELFSLGSSPYPGMPVDSKFYKMIKEGFRMLSPEHAPAEMYDIMKTCWDADPLKRPTFKQIVQLIEKQISESTNHIYSNLTNCSPSQQKPVVDHSVRINSVGSTASSSQPLLVRDDV.

The N-terminal stretch at 1-25 is a signal peptide; it reads MRGARGAWDFLCVLLLLLRVQTGSS. Over 26–520 the chain is Extracellular; it reads QPSVSPEEAS…QIQPHTLFTP (495 aa). 5 Ig-like C2-type domains span residues 27–112, 121–205, 212–308, 317–410, and 413–507; these read PSVS…VFVR, DRSL…LKVR, PVVS…LEVV, PMIN…VYVN, and PEIL…FNFA. A disulfide bridge connects residues cysteine 58 and cysteine 97. N-linked (GlcNAc...) asparagine glycosylation is found at asparagine 130 and asparagine 145. 3 disulfides stabilise this stretch: cysteine 136–cysteine 186, cysteine 151–cysteine 183, and cysteine 233–cysteine 290. Asparagine 283, asparagine 300, asparagine 320, asparagine 352, asparagine 367, asparagine 463, and asparagine 486 each carry an N-linked (GlcNAc...) asparagine glycan. Cysteines 428 and 491 form a disulfide. A helical transmembrane segment spans residues 521 to 541; sequence LLIGFVVVAGMMCIIVMILTY. Over 542–972 the chain is Cytoplasmic; sequence KYLQKPMYEV…SQPLLVRDDV (431 aa). Phosphotyrosine occurs at positions 543 and 549. Position 564 (tyrosine 564) interacts with Mg(2+). 2 positions are modified to phosphotyrosine; by autocatalysis: tyrosine 564 and tyrosine 566. Positions 564-566 are important for interaction with phosphotyrosine-binding proteins; the sequence is YVY. The 349-residue stretch at 585-933 folds into the Protein kinase domain; that stretch reads LSFGKTLGAG…ISESTNHIYS (349 aa). Residues 592 to 599, lysine 619, and 667 to 673 contribute to the ATP site; these read GAGAFGKV and EYCCYGD. Residues tyrosine 699 and tyrosine 717 each carry the phosphotyrosine; by autocatalysis modification. Tyrosine 726 carries the post-translational modification Phosphotyrosine. Phosphoserine; by PKC/PRKCA is present on residues serine 737 and serine 742. Residue aspartate 788 is the Proton acceptor of the active site. An ATP-binding site is contributed by arginine 792. Mg(2+) is bound by residues asparagine 793 and aspartate 806. Serine 817 carries the post-translational modification Phosphoserine. The residue at position 819 (tyrosine 819) is a Phosphotyrosine; by autocatalysis. Phosphoserine is present on serine 887. Tyrosine 896 carries the post-translational modification Phosphotyrosine. Tyrosine 932 bears the Phosphotyrosine; by autocatalysis mark. Residue serine 955 is modified to Phosphoserine.

Belongs to the protein kinase superfamily. Tyr protein kinase family. CSF-1/PDGF receptor subfamily. Monomer in the absence of bound KITLG/SCF. Homodimer in the presence of bound KITLG/SCF, forming a heterotetramer with two KITLG/SCF molecules. Interacts (via phosphorylated tyrosine residues) with the adapter proteins GRB2 and GRB7 (via SH2 domain), and SH2B2/APS. Interacts (via C-terminus) with MPDZ (via the tenth PDZ domain). Interacts (via phosphorylated tyrosine residues) with PIK3R1 and PIK3CD. Interacts (via phosphorylated tyrosine) with CRK (isoform Crk-II), FYN, SHC1 and MATK/CHK (via SH2 domain). Interacts with LYN and FES/FPS. Interacts (via phosphorylated tyrosine residues) with the protein phosphatases PTPN6/SHP-1 (via SH2 domain), PTPN11/SHP-2 (via SH2 domain) and PTPRU. Interacts with PLCG1. Interacts with DOK1 and TEC. Interacts with IL1RAP (independent of stimulation with KITLG/SCF). A mast cell-specific KITLG/SCF-induced interleukin-33 signaling complex contains IL1RL1, IL1RAP, KIT and MYD88. Ubiquitinated by SOCS6. KIT is rapidly ubiquitinated after autophosphorylation induced by KITLG/SCF binding, leading to internalization and degradation. In terms of processing, autophosphorylated on tyrosine residues. KITLG/SCF binding promotes autophosphorylation. Phosphorylated tyrosine residues are important for interaction with specific binding partners.

Its subcellular location is the cell membrane. The enzyme catalyses L-tyrosyl-[protein] + ATP = O-phospho-L-tyrosyl-[protein] + ADP + H(+). Present in an inactive conformation in the absence of bound ligand. KITLG/SCF binding leads to dimerization and activation by autophosphorylation on tyrosine residues. Activity is down-regulated by PRKCA-mediated phosphorylation on serine residues. In terms of biological role, tyrosine-protein kinase that acts as a cell-surface receptor for the cytokine KITLG/SCF and plays an essential role in the regulation of cell survival and proliferation, hematopoiesis, stem cell maintenance, gametogenesis, mast cell development, migration and function, and in melanogenesis. In response to KITLG/SCF binding, KIT can activate several signaling pathways. Phosphorylates PIK3R1, PLCG1, SH2B2/APS and CBL. Activates the AKT1 signaling pathway by phosphorylation of PIK3R1, the regulatory subunit of phosphatidylinositol 3-kinase. Activated KIT also transmits signals via GRB2 and activation of RAS, RAF1 and the MAP kinases MAPK1/ERK2 and/or MAPK3/ERK1. Promotes activation of STAT family members STAT1, STAT3, STAT5A and STAT5B. Activation of PLCG1 leads to the production of the cellular signaling molecules diacylglycerol and inositol 1,4,5-trisphosphate. KIT signaling is modulated by protein phosphatases, and by rapid internalization and degradation of the receptor. Activated KIT promotes phosphorylation of the protein phosphatases PTPN6/SHP-1 and PTPRU, and of the transcription factors STAT1, STAT3, STAT5A and STAT5B. Promotes phosphorylation of PIK3R1, CBL, CRK (isoform Crk-II), LYN, MAPK1/ERK2 and/or MAPK3/ERK1, PLCG1, SRC and SHC1. In Callithrix jacchus (White-tufted-ear marmoset), this protein is Mast/stem cell growth factor receptor Kit (KIT).